Consider the following 316-residue polypeptide: Phosphatidylinositol mannoside acyltransferase (316 aa).

Catalysis depends on histidine 137, which acts as the Proton acceptor. The hexadecanoyl-CoA site is built by histidine 137 and arginine 175. The active site involves glutamate 211. Glutamate 240 is a binding site for hexadecanoyl-CoA.

Belongs to the LpxL/LpxM/LpxP family.

It localises to the cell inner membrane. It carries out the reaction a 2,6-O-bis(alpha-D-mannopyranosyl)-1-phosphatidyl-1D-myo-inositol + an acyl-CoA = a 2-O-(alpha-D-mannosyl)-6-O-(6-O-acyl-alpha-D-mannosyl)-1-phosphatidyl-1D-myo-inositol + CoA. The catalysed reaction is a 1,2-diacyl-sn-glycero-3-phospho-[alpha-D-mannopyranosyl-(1&lt;-&gt;6)-D-myo-inositol] + an acyl-CoA = a 1,2-diacyl-sn-glycero-3-phospho-[alpha-D-6-acyl-mannopyranosyl-(1&lt;-&gt;6)-D-myo-inositol] + CoA. Its pathway is phospholipid metabolism; phosphatidylinositol metabolism. Functionally, catalyzes the transfer of a palmitoyl moiety from palmitoyl-CoA to the 6-position of the mannose ring linked to the 2-position of myo-inositol in phosphatidyl-myo-inositol monomannoside (PIM1) or dimannoside (PIM2). Essential for growth and survival in axenic cultures and during macrophage infection and in a mouse model of infection. This chain is Phosphatidylinositol mannoside acyltransferase, found in Mycobacterium tuberculosis (strain ATCC 25618 / H37Rv).